The primary structure comprises 933 residues: 2-oxoglutarate dehydrogenase E1 component (933 aa).

Belongs to the alpha-ketoglutarate dehydrogenase family. Homodimer. Part of the 2-oxoglutarate dehydrogenase (OGDH) complex composed of E1 (2-oxoglutarate dehydrogenase), E2 (dihydrolipoamide succinyltransferase) and E3 (dihydrolipoamide dehydrogenase); the complex contains multiple copies of the three enzymatic components (E1, E2 and E3). The cofactor is thiamine diphosphate.

The enzyme catalyses N(6)-[(R)-lipoyl]-L-lysyl-[protein] + 2-oxoglutarate + H(+) = N(6)-[(R)-S(8)-succinyldihydrolipoyl]-L-lysyl-[protein] + CO2. Its function is as follows. E1 component of the 2-oxoglutarate dehydrogenase (OGDH) complex which catalyzes the decarboxylation of 2-oxoglutarate, the first step in the conversion of 2-oxoglutarate to succinyl-CoA and CO(2). In Staphylococcus saprophyticus subsp. saprophyticus (strain ATCC 15305 / DSM 20229 / NCIMB 8711 / NCTC 7292 / S-41), this protein is 2-oxoglutarate dehydrogenase E1 component.